The following is a 79-amino-acid chain: Sec-independent protein translocase protein TatA (79 aa).

Residues 1-21 (MGGFTSIWHWVIVLLVIVLLF) form a helical membrane-spanning segment. The segment at 46–79 (DDEEEAKNEPKTLDAQATQTKVHETSEIKSKQES) is disordered. Residues 66 to 79 (KVHETSEIKSKQES) show a composition bias toward basic and acidic residues.

Belongs to the TatA/E family. The Tat system comprises two distinct complexes: a TatABC complex, containing multiple copies of TatA, TatB and TatC subunits, and a separate TatA complex, containing only TatA subunits. Substrates initially bind to the TatABC complex, which probably triggers association of the separate TatA complex to form the active translocon.

The protein resides in the cell inner membrane. Its function is as follows. Part of the twin-arginine translocation (Tat) system that transports large folded proteins containing a characteristic twin-arginine motif in their signal peptide across membranes. TatA could form the protein-conducting channel of the Tat system. This chain is Sec-independent protein translocase protein TatA, found in Helicobacter pylori (strain HPAG1).